The primary structure comprises 311 residues: Protein N-terminal asparagine amidohydrolase (311 aa).

As to quaternary structure, monomer.

Its subcellular location is the cytoplasm. The catalysed reaction is N-terminal L-asparaginyl-[protein] + H2O + H(+) = N-terminal L-aspartyl-[protein] + NH4(+). Its function is as follows. N-terminal asparagine deamidase that mediates deamidation of N-terminal asparagine residues to aspartate. Required for the ubiquitin-dependent turnover of intracellular proteins that initiate with Met-Asn. These proteins are acetylated on the retained initiator methionine and can subsequently be modified by the removal of N-acetyl methionine by acylaminoacid hydrolase (AAH). Conversion of the resulting N-terminal asparagine to aspartate by NTAN1/PNAD renders the protein susceptible to arginylation, polyubiquitination and degradation as specified by the N-end rule. This enzyme does not act on substrates with internal or C-terminal asparagines and does not act on glutamine residues in any position. This chain is Protein N-terminal asparagine amidohydrolase (NTAN1), found in Sus scrofa (Pig).